A 34-amino-acid polypeptide reads, in one-letter code: Photosystem II reaction center protein M (34 aa).

The helical transmembrane segment at 5-25 (ILAFIATVLFILVPTAFLLII) threads the bilayer.

It belongs to the PsbM family. In terms of assembly, PSII is composed of 1 copy each of membrane proteins PsbA, PsbB, PsbC, PsbD, PsbE, PsbF, PsbH, PsbI, PsbJ, PsbK, PsbL, PsbM, PsbT, PsbX, PsbY, PsbZ, Psb30/Ycf12, at least 3 peripheral proteins of the oxygen-evolving complex and a large number of cofactors. It forms dimeric complexes.

Its subcellular location is the plastid. It localises to the chloroplast thylakoid membrane. One of the components of the core complex of photosystem II (PSII). PSII is a light-driven water:plastoquinone oxidoreductase that uses light energy to abstract electrons from H(2)O, generating O(2) and a proton gradient subsequently used for ATP formation. It consists of a core antenna complex that captures photons, and an electron transfer chain that converts photonic excitation into a charge separation. This subunit is found at the monomer-monomer interface. The sequence is that of Photosystem II reaction center protein M from Piper cenocladum (Ant piper).